A 122-amino-acid chain; its full sequence is UPF0102 protein ECH_0093 (122 aa).

This sequence belongs to the UPF0102 family.

This is UPF0102 protein ECH_0093 from Ehrlichia chaffeensis (strain ATCC CRL-10679 / Arkansas).